We begin with the raw amino-acid sequence, 950 residues long: Lon protease homolog, mitochondrial (950 aa).

Residues 1-65 (MAASTGYVRL…VPMGGGQWRG (65 aa)) constitute a mitochondrion transit peptide. Disordered stretches follow at residues 67-94 (WDAGSRGGSDETSEGGVEDGATASSGEG) and 212-243 (PEGLEPEAENKQKSRRKLKRGKKEVGDELGAK). The Lon N-terminal domain maps to 112–360 (LPLIAISRNP…KALSLLKKEF (249 aa)). The segment covering 224 to 233 (KSRRKLKRGK) has biased composition (basic residues). 513–520 (GPPGVGKT) provides a ligand contact to ATP. Residues 749-939 (VTPPGVVMGL…RDIFRIAFPL (191 aa)) enclose the Lon proteolytic domain. Catalysis depends on residues Ser845 and Lys888.

Belongs to the peptidase S16 family. Homohexamer. Organized in a ring with a central cavity. The ATP-binding and proteolytic domains (AP-domain) form a hexameric chamber, while the N-terminal domain is arranged as a trimer of dimers. DNA and RNA binding is stimulated by substrate and inhibited by ATP binding. Interacts with TWNK and mitochondrial DNA polymerase subunit POLG.

The protein localises to the mitochondrion matrix. It carries out the reaction Hydrolysis of proteins in presence of ATP.. In terms of biological role, ATP-dependent serine protease that mediates the selective degradation of misfolded, unassembled or oxidatively damaged polypeptides as well as certain short-lived regulatory proteins in the mitochondrial matrix. Endogenous substrates include mitochondrial steroidogenic acute regulatory (StAR) protein, DELE1, helicase Twinkle (TWNK) and the large ribosomal subunit protein MRPL32/bL32m. MRPL32/bL32m is protected from degradation by LONP1 when it is bound to a nucleic acid (RNA), but TWNK is not. May also have a chaperone function in the assembly of inner membrane protein complexes. Participates in the regulation of mitochondrial gene expression and in the maintenance of the integrity of the mitochondrial genome. Binds to mitochondrial promoters and RNA in a single-stranded, site-specific, and strand-specific manner. May regulate mitochondrial DNA replication and/or gene expression using site-specific, single-stranded DNA binding to target the degradation of regulatory proteins binding to adjacent sites in mitochondrial promoters. The polypeptide is Lon protease homolog, mitochondrial (Lonp1) (Rattus norvegicus (Rat)).